Consider the following 327-residue polypeptide: Glycerol-3-phosphate dehydrogenase [NAD(P)+] (327 aa).

NADPH is bound by residues Phe-14, Arg-35, and Lys-108. Residues Lys-108 and Gly-136 each coordinate sn-glycerol 3-phosphate. Ala-140 is an NADPH binding site. Sn-glycerol 3-phosphate contacts are provided by Lys-191, Asp-244, Ser-254, Arg-255, and Asn-256. The active-site Proton acceptor is Lys-191. Arg-255 provides a ligand contact to NADPH. Residues Leu-275 and Glu-277 each coordinate NADPH.

It belongs to the NAD-dependent glycerol-3-phosphate dehydrogenase family.

It localises to the cytoplasm. It carries out the reaction sn-glycerol 3-phosphate + NAD(+) = dihydroxyacetone phosphate + NADH + H(+). It catalyses the reaction sn-glycerol 3-phosphate + NADP(+) = dihydroxyacetone phosphate + NADPH + H(+). The protein operates within membrane lipid metabolism; glycerophospholipid metabolism. Catalyzes the reduction of the glycolytic intermediate dihydroxyacetone phosphate (DHAP) to sn-glycerol 3-phosphate (G3P), the key precursor for phospholipid synthesis. This Agrobacterium fabrum (strain C58 / ATCC 33970) (Agrobacterium tumefaciens (strain C58)) protein is Glycerol-3-phosphate dehydrogenase [NAD(P)+].